A 469-amino-acid polypeptide reads, in one-letter code: Putative F-box/LRR-repeat protein At5g02930 (469 aa).

The region spanning 27–77 is the F-box domain; sequence VDSISDLPDAVLQHIFSYIPTELAIRTSVLSKRWRHVWSETPHLSFEWLKV. LRR repeat units follow at residues 30–58, 178–203, 204–214, 223–250, 296–321, and 341–366; these read ISDLPDAVLQHIFSYIPTELAIRTSVLSK, DCTMSDESFLEILSGCPILESLSLKF, CMSLKYLNLSK, IERISYIRAPMLSMQIVAPYIHYLRLRD, TMLKTFQKVEKLTLGVNLLQMLSLSK, and IIRSVVPGIARLLQNLPGLKKITVYT.

This Arabidopsis thaliana (Mouse-ear cress) protein is Putative F-box/LRR-repeat protein At5g02930.